A 332-amino-acid chain; its full sequence is L-lactate dehydrogenase A chain (332 aa).

Position 2 is an N-acetylalanine (Ala2). An N6-acetyllysine; alternate modification is found at Lys5. The residue at position 5 (Lys5) is an N6-succinyllysine; alternate. Phosphotyrosine is present on Tyr10. Position 14 is an N6-acetyllysine (Lys14). Phosphothreonine is present on Thr18. Residue 29–57 (GAVGMACAISILMKDLADELALVDVIEDK) participates in NAD(+) binding. Lys57 carries the post-translational modification N6-acetyllysine; alternate. Lys57 is covalently cross-linked (Glycyl lysine isopeptide (Lys-Gly) (interchain with G-Cter in SUMO2); alternate). Lys81 carries the post-translational modification N6-acetyllysine. Arg99 contacts NAD(+). Residue Arg106 coordinates substrate. An N6-acetyllysine; alternate modification is found at Lys118. Lys118 bears the N6-succinyllysine; alternate mark. Position 126 is an N6-acetyllysine (Lys126). Asn138 contacts NAD(+). Residues Asn138 and Arg169 each contribute to the substrate site. The Proton acceptor role is filled by His193. N6-acetyllysine is present on residues Lys224 and Lys232. A Phosphotyrosine modification is found at Tyr239. At Lys243 the chain carries N6-acetyllysine. Substrate is bound at residue Thr248. Thr309 is subject to Phosphothreonine. Phosphoserine is present on Ser310. Position 318 is an N6-acetyllysine; alternate (Lys318). Lys318 is subject to N6-succinyllysine; alternate. Position 322 is a phosphothreonine (Thr322).

It belongs to the LDH/MDH superfamily. LDH family. As to quaternary structure, homotetramer. Interacts with PTEN upstream reading frame protein MP31. Interacts with folliculin FLCN; the interaction is direct and inhibits enzymatic activity. ISGylated. As to expression, predominantly expressed in anaerobic tissues such as skeletal muscle and liver.

It localises to the cytoplasm. It carries out the reaction (S)-lactate + NAD(+) = pyruvate + NADH + H(+). The protein operates within fermentation; pyruvate fermentation to lactate; (S)-lactate from pyruvate: step 1/1. Fermentation of pyruvate to lactate is inhibited when bound to folliculin FLCN, perhaps partly by FLCN preventing binding of cofactor NADH. In terms of biological role, interconverts simultaneously and stereospecifically pyruvate and lactate with concomitant interconversion of NADH and NAD(+). The protein is L-lactate dehydrogenase A chain of Homo sapiens (Human).